A 132-amino-acid chain; its full sequence is UPF0102 protein LI0223 (132 aa).

This sequence belongs to the UPF0102 family.

The protein is UPF0102 protein LI0223 of Lawsonia intracellularis (strain PHE/MN1-00).